The primary structure comprises 1014 residues: EMILIN-1-A (1014 aa).

The N-terminal stretch at 1–27 (MALYFVYLSTLLALILLGDNWAAGTYA) is a signal peptide. Positions 53-128 (HRNWCAYVVT…HGYSGDDCSD (76 aa)) constitute an EMI domain. 3 cysteine pairs are disulfide-bonded: C57–C118, C84–C89, and C117–C126. Disordered stretches follow at residues 125–150 (DCSDGSSAIHDSRARPTGEEGRSDSD) and 811–869 (QDFT…ANVP). Positions 134–150 (HDSRARPTGEEGRSDSD) are enriched in basic and acidic residues. The stretch at 145–179 (GRSDSDRIRQLEEQIQSLNKNLHNLQKKIYEESQR) forms a coiled coil. One can recognise a Collagen-like domain in the interval 815–865 (GPPGLPGPQGEKGSKGPPGPRGPLGKEGPQGRVGPVGPPGLRGEQGPPGKD). Residues 840–856 (KEGPQGRVGPVGPPGLR) are compositionally biased toward low complexity. One can recognise a C1q domain in the interval 866-1012 (ANVPRLSFSA…GMLLYEESED (147 aa)).

The protein resides in the secreted. It localises to the extracellular space. The protein localises to the extracellular matrix. In terms of biological role, may be responsible for anchoring smooth muscle cells to elastic fibers, and may be involved not only in the formation of the elastic fiber, but also in the processes that regulate vessel assembly. Has cell adhesive capacity. In Danio rerio (Zebrafish), this protein is EMILIN-1-A.